Reading from the N-terminus, the 166-residue chain is UBA-like domain-containing protein 2-A (166 aa).

The disordered stretch occupies residues 120–166 (QQPVWLPPASPTTHLHHHHHHPQPVWPPNSQPTGGPQKAMAAMDGQR).

It belongs to the UBALD family.

The sequence is that of UBA-like domain-containing protein 2-A (ubald2-a) from Xenopus laevis (African clawed frog).